Reading from the N-terminus, the 480-residue chain is Type II methyltransferase M.NspV (480 aa).

The protein belongs to the methyltransferase superfamily.

Its function is as follows. A gamma subtype methylase that recognizes the double-stranded sequence 5'-TTCGAA-3', and methylates it on an unknown base to protect it against the NspV endonuclease. This Nostoc sp. (strain ATCC 29411 / PCC 7524) protein is Type II methyltransferase M.NspV.